The sequence spans 209 residues: Peroxiredoxin (209 aa).

Residues 2 to 156 (PLIGDKFPEM…IVRMIRAFRV (155 aa)) form the Thioredoxin domain. C44 (cysteine sulfenic acid (-SOH) intermediate) is an active-site residue. R119 is a substrate binding site. A disulfide bridge links C198 with C204.

Belongs to the peroxiredoxin family. Prx6 subfamily. Homodecamer. Pentamer of dimers that assemble into a ring structure.

Its subcellular location is the cytoplasm. The catalysed reaction is a hydroperoxide + [thioredoxin]-dithiol = an alcohol + [thioredoxin]-disulfide + H2O. Its function is as follows. Thiol-specific peroxidase that catalyzes the reduction of hydrogen peroxide and organic hydroperoxides to water and alcohols, respectively. Plays a role in cell protection against oxidative stress by detoxifying peroxides. The polypeptide is Peroxiredoxin (Methanothermobacter thermautotrophicus (strain ATCC 29096 / DSM 1053 / JCM 10044 / NBRC 100330 / Delta H) (Methanobacterium thermoautotrophicum)).